Here is a 338-residue protein sequence, read N- to C-terminus: Aspartate carbamoyltransferase catalytic subunit (338 aa).

Carbamoyl phosphate is bound by residues R59 and T60. An L-aspartate-binding site is contributed by K87. Carbamoyl phosphate contacts are provided by R109, H142, and Q145. The L-aspartate site is built by R182 and R248. 2 residues coordinate carbamoyl phosphate: G289 and P290.

Belongs to the aspartate/ornithine carbamoyltransferase superfamily. ATCase family. Heterododecamer (2C3:3R2) of six catalytic PyrB chains organized as two trimers (C3), and six regulatory PyrI chains organized as three dimers (R2).

It catalyses the reaction carbamoyl phosphate + L-aspartate = N-carbamoyl-L-aspartate + phosphate + H(+). Its pathway is pyrimidine metabolism; UMP biosynthesis via de novo pathway; (S)-dihydroorotate from bicarbonate: step 2/3. In terms of biological role, catalyzes the condensation of carbamoyl phosphate and aspartate to form carbamoyl aspartate and inorganic phosphate, the committed step in the de novo pyrimidine nucleotide biosynthesis pathway. This is Aspartate carbamoyltransferase catalytic subunit from Synechococcus elongatus (strain ATCC 33912 / PCC 7942 / FACHB-805) (Anacystis nidulans R2).